Consider the following 319-residue polypeptide: ATP-dependent 6-phosphofructokinase (319 aa).

An ATP-binding site is contributed by Gly11. ADP is bound at residue Arg21–Arg25. ATP is bound by residues Arg72–Ser73 and Gly102–Ser105. Asp103 provides a ligand contact to Mg(2+). Thr125–Asp127 provides a ligand contact to substrate. The Proton acceptor role is filled by Asp127. Residue Arg154 coordinates ADP. Substrate-binding positions include Arg162 and Met169–Arg171. Residues Gly185–Glu187, Arg211, and Lys213–His215 contribute to the ADP site. Substrate-binding positions include Glu222, Arg243, and His249–Arg252.

The protein belongs to the phosphofructokinase type A (PFKA) family. ATP-dependent PFK group I subfamily. Prokaryotic clade 'B1' sub-subfamily. Homotetramer. The cofactor is Mg(2+).

It is found in the cytoplasm. It catalyses the reaction beta-D-fructose 6-phosphate + ATP = beta-D-fructose 1,6-bisphosphate + ADP + H(+). It participates in carbohydrate degradation; glycolysis; D-glyceraldehyde 3-phosphate and glycerone phosphate from D-glucose: step 3/4. With respect to regulation, allosterically activated by ADP and other diphosphonucleosides, and allosterically inhibited by phosphoenolpyruvate. In terms of biological role, catalyzes the phosphorylation of D-fructose 6-phosphate to fructose 1,6-bisphosphate by ATP, the first committing step of glycolysis. The chain is ATP-dependent 6-phosphofructokinase from Natranaerobius thermophilus (strain ATCC BAA-1301 / DSM 18059 / JW/NM-WN-LF).